A 586-amino-acid polypeptide reads, in one-letter code: A-type ATP synthase subunit A (586 aa).

232–239 is a binding site for ATP; it reads GPFGSGKT.

Belongs to the ATPase alpha/beta chains family. Has multiple subunits with at least A(3), B(3), C, D, E, F, H, I and proteolipid K(x).

The protein resides in the cell membrane. It catalyses the reaction ATP + H2O + 4 H(+)(in) = ADP + phosphate + 5 H(+)(out). In terms of biological role, component of the A-type ATP synthase that produces ATP from ADP in the presence of a proton gradient across the membrane. The A chain is the catalytic subunit. This Methanococcus maripaludis (strain DSM 14266 / JCM 13030 / NBRC 101832 / S2 / LL) protein is A-type ATP synthase subunit A.